We begin with the raw amino-acid sequence, 213 residues long: ATP phosphoribosyltransferase (213 aa).

The protein belongs to the ATP phosphoribosyltransferase family. Short subfamily. Heteromultimer composed of HisG and HisZ subunits.

The protein localises to the cytoplasm. It carries out the reaction 1-(5-phospho-beta-D-ribosyl)-ATP + diphosphate = 5-phospho-alpha-D-ribose 1-diphosphate + ATP. Its pathway is amino-acid biosynthesis; L-histidine biosynthesis; L-histidine from 5-phospho-alpha-D-ribose 1-diphosphate: step 1/9. Catalyzes the condensation of ATP and 5-phosphoribose 1-diphosphate to form N'-(5'-phosphoribosyl)-ATP (PR-ATP). Has a crucial role in the pathway because the rate of histidine biosynthesis seems to be controlled primarily by regulation of HisG enzymatic activity. This is ATP phosphoribosyltransferase from Chromobacterium violaceum (strain ATCC 12472 / DSM 30191 / JCM 1249 / CCUG 213 / NBRC 12614 / NCIMB 9131 / NCTC 9757 / MK).